We begin with the raw amino-acid sequence, 35 residues long: Riboflavin-binding protein (35 aa).

An intrachain disulfide couples Cys5 to Cys32.

This sequence belongs to the folate receptor family.

In terms of biological role, required for the transport of riboflavin to the developing oocyte. The sequence is that of Riboflavin-binding protein from Struthio camelus (Common ostrich).